The chain runs to 178 residues: Cytochrome b6-f complex iron-sulfur subunit (178 aa).

Residues 20–42 (LLTFGTATGVALGALYPVANFFM) traverse the membrane as a helical segment. The region spanning 71–161 (NHPAGDRSLV…IDIDDDNVLV (91 aa)) is the Rieske domain. Residues C107, H109, C125, and H128 each coordinate [2Fe-2S] cluster. C112 and C127 form a disulfide bridge.

It belongs to the Rieske iron-sulfur protein family. The 4 large subunits of the cytochrome b6-f complex are cytochrome b6, subunit IV (17 kDa polypeptide, PetD), cytochrome f and the Rieske protein, while the 4 small subunits are PetG, PetL, PetM and PetN. The complex functions as a dimer. It depends on [2Fe-2S] cluster as a cofactor.

It localises to the cellular thylakoid membrane. It carries out the reaction 2 oxidized [plastocyanin] + a plastoquinol + 2 H(+)(in) = 2 reduced [plastocyanin] + a plastoquinone + 4 H(+)(out). Its function is as follows. Component of the cytochrome b6-f complex, which mediates electron transfer between photosystem II (PSII) and photosystem I (PSI), cyclic electron flow around PSI, and state transitions. This is Cytochrome b6-f complex iron-sulfur subunit from Prochlorococcus marinus (strain SARG / CCMP1375 / SS120).